We begin with the raw amino-acid sequence, 428 residues long: Chaperone SurA (428 aa).

Residues 1–19 form the signal peptide; that stretch reads MNIWKTLLLGMLVTGSAVS. PpiC domains are found at residues 170–268 and 277–377; these read SVEY…KIED and VTEV…EVLD.

Its subcellular location is the periplasm. The catalysed reaction is [protein]-peptidylproline (omega=180) = [protein]-peptidylproline (omega=0). In terms of biological role, chaperone involved in the correct folding and assembly of outer membrane proteins. Recognizes specific patterns of aromatic residues and the orientation of their side chains, which are found more frequently in integral outer membrane proteins. May act in both early periplasmic and late outer membrane-associated steps of protein maturation. The protein is Chaperone SurA of Vibrio vulnificus (strain YJ016).